The primary structure comprises 249 residues: MRILISNDDGVTAPGLAALYAALADYTECVVIAPEQDKSGASSSLTLDRPLHPQYLANGFISLNGTPTDCVHLGLNGLLEREPDMVVSGINLGANLGDDVLYSGTVAAALEGRFLKRPSFAFSLVSRQVDNLPTAAYFARKLVEAHAGLDLPPRTVLNVNIPNLPIDHIRGIQLTRLGHRARAAAPMKVVDPRGKAGYWIAAAGDAEDGGPGTDFHAVMQGYVSITPLQLDRTFNDAFRSLDGWLEGLN.

A divalent metal cation is bound by residues D8, D9, S39, and N91.

Belongs to the SurE nucleotidase family. It depends on a divalent metal cation as a cofactor.

The protein resides in the cytoplasm. It catalyses the reaction a ribonucleoside 5'-phosphate + H2O = a ribonucleoside + phosphate. Its function is as follows. Nucleotidase that shows phosphatase activity on nucleoside 5'-monophosphates. The polypeptide is 5'-nucleotidase SurE (Pseudomonas fluorescens (strain Pf0-1)).